Reading from the N-terminus, the 392-residue chain is Phosphoglycerate kinase (392 aa).

Residues 21–23, arginine 36, 59–62, arginine 113, and arginine 146 each bind substrate; these read DFN and HLGR. ATP-binding positions include lysine 197, glutamate 319, and 345 to 348; that span reads GGDT.

This sequence belongs to the phosphoglycerate kinase family. In terms of assembly, monomer.

It localises to the cytoplasm. It carries out the reaction (2R)-3-phosphoglycerate + ATP = (2R)-3-phospho-glyceroyl phosphate + ADP. The protein operates within carbohydrate degradation; glycolysis; pyruvate from D-glyceraldehyde 3-phosphate: step 2/5. The protein is Phosphoglycerate kinase of Francisella philomiragia subsp. philomiragia (strain ATCC 25017 / CCUG 19701 / FSC 153 / O#319-036).